The primary structure comprises 430 residues: Probable sulfoacetate transporter SauU (430 aa).

10 consecutive transmembrane segments (helical) span residues 47-67, 83-103, 142-162, 165-185, 228-248, 263-283, 301-321, 327-347, 362-382, and 390-410; these read LGLV…LGGW, LIWG…ILVV, FARL…AAAG, EAFI…AFFF, WLVT…LTWL, LALF…LGGV, AVLF…TFTA, VILL…LWSL, MMNT…GYLI, and LPFM…LFIN.

It belongs to the major facilitator superfamily.

It localises to the cell membrane. Functionally, may transport sulfoacetate into the cell. The protein is Probable sulfoacetate transporter SauU (sauU) of Cupriavidus necator (strain ATCC 17699 / DSM 428 / KCTC 22496 / NCIMB 10442 / H16 / Stanier 337) (Ralstonia eutropha).